Here is a 157-residue protein sequence, read N- to C-terminus: SsrA-binding protein (157 aa).

The protein belongs to the SmpB family.

The protein resides in the cytoplasm. Required for rescue of stalled ribosomes mediated by trans-translation. Binds to transfer-messenger RNA (tmRNA), required for stable association of tmRNA with ribosomes. tmRNA and SmpB together mimic tRNA shape, replacing the anticodon stem-loop with SmpB. tmRNA is encoded by the ssrA gene; the 2 termini fold to resemble tRNA(Ala) and it encodes a 'tag peptide', a short internal open reading frame. During trans-translation Ala-aminoacylated tmRNA acts like a tRNA, entering the A-site of stalled ribosomes, displacing the stalled mRNA. The ribosome then switches to translate the ORF on the tmRNA; the nascent peptide is terminated with the 'tag peptide' encoded by the tmRNA and targeted for degradation. The ribosome is freed to recommence translation, which seems to be the essential function of trans-translation. The polypeptide is SsrA-binding protein (Rhodococcus jostii (strain RHA1)).